A 155-amino-acid chain; its full sequence is UPF0178 protein RHE_CH02229 (155 aa).

Belongs to the UPF0178 family.

This chain is UPF0178 protein RHE_CH02229, found in Rhizobium etli (strain ATCC 51251 / DSM 11541 / JCM 21823 / NBRC 15573 / CFN 42).